Reading from the N-terminus, the 276-residue chain is Molybdenum storage protein subunit alpha (276 aa).

As to quaternary structure, octamer consisting of 4 alpha and 4 beta chains.

It is found in the cytoplasm. In terms of biological role, intracellular storage of molybdenum. Binds polyoxomolybdates. Can bind at least 90 molybdenum atoms per protein molecule. The sequence is that of Molybdenum storage protein subunit alpha from Azotobacter vinelandii (strain DJ / ATCC BAA-1303).